The following is a 215-amino-acid chain: Adenylate kinase (215 aa).

Gly-10 to Thr-15 is a binding site for ATP. The tract at residues Ser-30–Val-59 is NMP. Residues Thr-31, Arg-36, Gln-57–Val-59, Gly-85–Arg-88, and Gln-92 each bind AMP. The tract at residues Gly-126–Asp-162 is LID. Arg-127 serves as a coordination point for ATP. Zn(2+) contacts are provided by Cys-130 and Cys-132. Residue Ser-135–Tyr-136 coordinates ATP. Zn(2+) contacts are provided by Cys-149 and Cys-152. Arg-159 and Arg-170 together coordinate AMP. Residue Gly-198 participates in ATP binding.

This sequence belongs to the adenylate kinase family. As to quaternary structure, monomer.

The protein resides in the cytoplasm. The catalysed reaction is AMP + ATP = 2 ADP. The protein operates within purine metabolism; AMP biosynthesis via salvage pathway; AMP from ADP: step 1/1. In terms of biological role, catalyzes the reversible transfer of the terminal phosphate group between ATP and AMP. Plays an important role in cellular energy homeostasis and in adenine nucleotide metabolism. This chain is Adenylate kinase, found in Methanothrix thermoacetophila (strain DSM 6194 / JCM 14653 / NBRC 101360 / PT) (Methanosaeta thermophila).